The primary structure comprises 425 residues: Dihydroorotase (425 aa).

Zn(2+) is bound by residues H59 and H61. Substrate contacts are provided by residues H61 to R63 and N93. Zn(2+)-binding residues include D151, H178, and H231. N277 serves as a coordination point for substrate. D304 is a Zn(2+) binding site. D304 is a catalytic residue. Substrate contacts are provided by residues H308 and F322 to G323.

Belongs to the metallo-dependent hydrolases superfamily. DHOase family. Class I DHOase subfamily. Zn(2+) is required as a cofactor.

It catalyses the reaction (S)-dihydroorotate + H2O = N-carbamoyl-L-aspartate + H(+). The protein operates within pyrimidine metabolism; UMP biosynthesis via de novo pathway; (S)-dihydroorotate from bicarbonate: step 3/3. In terms of biological role, catalyzes the reversible cyclization of carbamoyl aspartate to dihydroorotate. In Staphylococcus epidermidis (strain ATCC 12228 / FDA PCI 1200), this protein is Dihydroorotase.